The sequence spans 132 residues: Small ribosomal subunit protein uS8 (132 aa).

It belongs to the universal ribosomal protein uS8 family. As to quaternary structure, part of the 30S ribosomal subunit. Contacts proteins S5 and S12.

One of the primary rRNA binding proteins, it binds directly to 16S rRNA central domain where it helps coordinate assembly of the platform of the 30S subunit. This Leptospira biflexa serovar Patoc (strain Patoc 1 / Ames) protein is Small ribosomal subunit protein uS8.